The sequence spans 231 residues: Ribonuclease 3 (231 aa).

An RNase III domain is found at 5-134 (QKKLKNDYGL…FLGALFIDQG (130 aa)). Residue Glu-47 coordinates Mg(2+). Asp-51 is a catalytic residue. Residues Asn-120 and Glu-123 each contribute to the Mg(2+) site. Glu-123 is a catalytic residue. The DRBM domain occupies 160-229 (DYKTELQEVL…AENAIKGQNH (70 aa)).

It belongs to the ribonuclease III family. Homodimer. Mg(2+) serves as cofactor.

It localises to the cytoplasm. It catalyses the reaction Endonucleolytic cleavage to 5'-phosphomonoester.. Digests double-stranded RNA. Involved in the processing of primary rRNA transcript to yield the immediate precursors to the large and small rRNAs (23S and 16S). Processes some mRNAs, and tRNAs when they are encoded in the rRNA operon. Processes pre-crRNA and tracrRNA of type II CRISPR loci if present in the organism. This chain is Ribonuclease 3, found in Lactococcus lactis subsp. cremoris (strain MG1363).